Reading from the N-terminus, the 379-residue chain is Actin, cytoplasmic (379 aa).

This sequence belongs to the actin family.

The protein localises to the cytoplasm. It is found in the cytoskeleton. The catalysed reaction is ATP + H2O = ADP + phosphate + H(+). Functionally, actins are highly conserved proteins that are involved in various types of cell motility and are ubiquitously expressed in all eukaryotic cells. The sequence is that of Actin, cytoplasmic from Euplotes crassus.